The sequence spans 691 residues: Threonine--tRNA ligase (691 aa).

Positions 1–22 (MSVPAQPAPGADGGDPRQPIRV) are disordered. The TGS domain occupies 1–73 (MSVPAQPAPG…DADAEVTPIA (73 aa)). A catalytic region spans residues 268–574 (DHRKLGVELD…LTEHYAGAFP (307 aa)). Residues C373, H424, and H551 each coordinate Zn(2+).

This sequence belongs to the class-II aminoacyl-tRNA synthetase family. In terms of assembly, homodimer. Zn(2+) serves as cofactor.

It localises to the cytoplasm. The catalysed reaction is tRNA(Thr) + L-threonine + ATP = L-threonyl-tRNA(Thr) + AMP + diphosphate + H(+). In terms of biological role, catalyzes the attachment of threonine to tRNA(Thr) in a two-step reaction: L-threonine is first activated by ATP to form Thr-AMP and then transferred to the acceptor end of tRNA(Thr). Also edits incorrectly charged L-seryl-tRNA(Thr). The sequence is that of Threonine--tRNA ligase from Mycobacterium ulcerans (strain Agy99).